A 532-amino-acid polypeptide reads, in one-letter code: Flavin-containing monooxygenase 1 (532 aa).

The Lumenal segment spans residues 1–510 (MVKRVAIVGA…TRTVQETPST (510 aa)). Residues 9–13 (GAGVS), E32, 40–41 (LW), and 61–62 (NS) contribute to the FAD site. NADP(+)-binding positions include 60–61 (SN) and 195–198 (SGTD). Residues 511–531 (FETLLKLFSFLALLVAVFFIF) form a helical membrane-spanning segment. L532 is a topological domain (cytoplasmic).

It belongs to the FMO family. Requires FAD as cofactor. Expressed in liver, lung and kidney and to a lesser extent in the heart and brain.

It is found in the endoplasmic reticulum membrane. It catalyses the reaction hypotaurine + NADPH + O2 + H(+) = taurine + NADP(+) + H2O. The enzyme catalyses hypotaurine + NADH + O2 + H(+) = taurine + NAD(+) + H2O. The catalysed reaction is trimethylamine + NADPH + O2 = trimethylamine N-oxide + NADP(+) + H2O. It carries out the reaction N,N-dimethylaniline + NADPH + O2 + H(+) = N,N-dimethylaniline N-oxide + NADP(+) + H2O. Broad spectrum monooxygenase that catalyzes the oxygenation of a wide variety of nitrogen- and sulfur-containing compounds including xenobiotics. Catalyzes the S-oxygenation of hypotaurine to produce taurine, an organic osmolyte involved in cell volume regulation as well as a variety of cytoprotective and developmental processes. In vitro, catalyzes the N-oxygenation of trimethylamine (TMA) to produce trimethylamine N-oxide (TMAO) and could therefore participate to the detoxification of this compound that is generated by the action of gut microbiota from dietary precursors such as choline, choline containing compounds, betaine or L-carnitine. This Rattus norvegicus (Rat) protein is Flavin-containing monooxygenase 1.